The chain runs to 367 residues: Peptide chain release factor 2 (367 aa).

The residue at position 247 (Gln247) is an N5-methylglutamine.

This sequence belongs to the prokaryotic/mitochondrial release factor family. Post-translationally, methylated by PrmC. Methylation increases the termination efficiency of RF2.

It is found in the cytoplasm. In terms of biological role, peptide chain release factor 2 directs the termination of translation in response to the peptide chain termination codons UGA and UAA. This is Peptide chain release factor 2 from Caulobacter sp. (strain K31).